Consider the following 700-residue polypeptide: Elongation factor G (700 aa).

The tr-type G domain occupies 6-286 (HKVRNIGIMA…AVIDYLPSPL (281 aa)). Residues 15 to 22 (AHIDAGKT), 79 to 83 (DTPGH), and 133 to 136 (NKMD) contribute to the GTP site.

Belongs to the TRAFAC class translation factor GTPase superfamily. Classic translation factor GTPase family. EF-G/EF-2 subfamily.

The protein resides in the cytoplasm. Catalyzes the GTP-dependent ribosomal translocation step during translation elongation. During this step, the ribosome changes from the pre-translocational (PRE) to the post-translocational (POST) state as the newly formed A-site-bound peptidyl-tRNA and P-site-bound deacylated tRNA move to the P and E sites, respectively. Catalyzes the coordinated movement of the two tRNA molecules, the mRNA and conformational changes in the ribosome. The chain is Elongation factor G from Leifsonia xyli subsp. xyli (strain CTCB07).